Reading from the N-terminus, the 260-residue chain is Thiazole synthase (260 aa).

Residue K96 is the Schiff-base intermediate with DXP of the active site. 1-deoxy-D-xylulose 5-phosphate is bound by residues G157, 184-185 (AG), and 206-207 (NT).

Belongs to the ThiG family. As to quaternary structure, homotetramer. Forms heterodimers with either ThiH or ThiS.

The protein localises to the cytoplasm. It carries out the reaction [ThiS sulfur-carrier protein]-C-terminal-Gly-aminoethanethioate + 2-iminoacetate + 1-deoxy-D-xylulose 5-phosphate = [ThiS sulfur-carrier protein]-C-terminal Gly-Gly + 2-[(2R,5Z)-2-carboxy-4-methylthiazol-5(2H)-ylidene]ethyl phosphate + 2 H2O + H(+). Its pathway is cofactor biosynthesis; thiamine diphosphate biosynthesis. Its function is as follows. Catalyzes the rearrangement of 1-deoxy-D-xylulose 5-phosphate (DXP) to produce the thiazole phosphate moiety of thiamine. Sulfur is provided by the thiocarboxylate moiety of the carrier protein ThiS. In vitro, sulfur can be provided by H(2)S. In Bradyrhizobium sp. (strain BTAi1 / ATCC BAA-1182), this protein is Thiazole synthase.